A 1044-amino-acid polypeptide reads, in one-letter code: Isoleucine--tRNA ligase (1044 aa).

The 'HIGH' region signature appears at 49–59; that stretch reads PYCSGRIHLGT. Positions 591-595 match the 'KMSKS' region motif; that stretch reads KMSKS. Lys-594 lines the ATP pocket.

The protein belongs to the class-I aminoacyl-tRNA synthetase family. IleS type 2 subfamily. Monomer. It depends on Zn(2+) as a cofactor.

Its subcellular location is the cytoplasm. It catalyses the reaction tRNA(Ile) + L-isoleucine + ATP = L-isoleucyl-tRNA(Ile) + AMP + diphosphate. Catalyzes the attachment of isoleucine to tRNA(Ile). As IleRS can inadvertently accommodate and process structurally similar amino acids such as valine, to avoid such errors it has two additional distinct tRNA(Ile)-dependent editing activities. One activity is designated as 'pretransfer' editing and involves the hydrolysis of activated Val-AMP. The other activity is designated 'posttransfer' editing and involves deacylation of mischarged Val-tRNA(Ile). The polypeptide is Isoleucine--tRNA ligase (Methanothermobacter thermautotrophicus (strain ATCC 29096 / DSM 1053 / JCM 10044 / NBRC 100330 / Delta H) (Methanobacterium thermoautotrophicum)).